Here is a 259-residue protein sequence, read N- to C-terminus: MEIRNRLAQLREKEEMALIAFIMAAVPDEDLCLDCIRALEQGGCDLLELGVPFTDPLADGEVIERFHHWGVRLGLNLKRGLDFAARVRAACQLPLILFSYYNPILQMGLDRFAGDCRSAGVDAVIVPDLPLDELGRLAGQGLELIPMLAPSSTLSRIQMAADLDPAFIYCVSVRGVTGVRSLPEMEIKDYLQKVRRVSTAPLALGFGISQPEQVRAFRGQADGVVIGSALAQIIEEYESRPALLPGMLEKRCQALKLLS.

Residues glutamate 48 and aspartate 59 each act as proton acceptor in the active site.

This sequence belongs to the TrpA family. In terms of assembly, tetramer of two alpha and two beta chains.

The enzyme catalyses (1S,2R)-1-C-(indol-3-yl)glycerol 3-phosphate + L-serine = D-glyceraldehyde 3-phosphate + L-tryptophan + H2O. Its pathway is amino-acid biosynthesis; L-tryptophan biosynthesis; L-tryptophan from chorismate: step 5/5. Functionally, the alpha subunit is responsible for the aldol cleavage of indoleglycerol phosphate to indole and glyceraldehyde 3-phosphate. This Syntrophomonas wolfei subsp. wolfei (strain DSM 2245B / Goettingen) protein is Tryptophan synthase alpha chain.